We begin with the raw amino-acid sequence, 435 residues long: Exodeoxyribonuclease 7 large subunit (435 aa).

Over residues 1-10 (MRGTRVTETA) the composition is skewed to polar residues. Disordered regions lie at residues 1-21 (MRGT…GPPT) and 413-435 (AGKA…PRGK).

The protein belongs to the XseA family. As to quaternary structure, heterooligomer composed of large and small subunits.

Its subcellular location is the cytoplasm. It catalyses the reaction Exonucleolytic cleavage in either 5'- to 3'- or 3'- to 5'-direction to yield nucleoside 5'-phosphates.. In terms of biological role, bidirectionally degrades single-stranded DNA into large acid-insoluble oligonucleotides, which are then degraded further into small acid-soluble oligonucleotides. This chain is Exodeoxyribonuclease 7 large subunit, found in Leifsonia xyli subsp. xyli (strain CTCB07).